Here is a 137-residue protein sequence, read N- to C-terminus: Transcription antitermination protein NusB (137 aa).

The protein belongs to the NusB family.

Involved in transcription antitermination. Required for transcription of ribosomal RNA (rRNA) genes. Binds specifically to the boxA antiterminator sequence of the ribosomal RNA (rrn) operons. The protein is Transcription antitermination protein NusB of Clavibacter michiganensis subsp. michiganensis (strain NCPPB 382).